The following is a 213-amino-acid chain: EEF1A lysine methyltransferase 1 (213 aa).

This sequence belongs to the class I-like SAM-binding methyltransferase superfamily. EFM5 family.

The protein resides in the cytoplasm. The enzyme catalyses L-lysyl-[protein] + 3 S-adenosyl-L-methionine = N(6),N(6),N(6)-trimethyl-L-lysyl-[protein] + 3 S-adenosyl-L-homocysteine + 3 H(+). In terms of biological role, protein-lysine methyltransferase that selectively catalyzes the trimethylation of EEF1A at 'Lys-79'. The protein is EEF1A lysine methyltransferase 1 of Gallus gallus (Chicken).